The sequence spans 422 residues: Tyrosine--tRNA ligase (422 aa).

Tyr-36 lines the L-tyrosine pocket. The short motif at 41 to 50 (PTADSLHIGH) is the 'HIGH' region element. The L-tyrosine site is built by Tyr-175 and Gln-179. The short motif at 235-239 (KFGKT) is the 'KMSKS' region element. Lys-238 contacts ATP. An S4 RNA-binding domain is found at 354–411 (TSLQEALTKSKLATSRSQARYFIKSNAITINAHKQSKIEYIFQDSDRIYNLYTLLKRG).

It belongs to the class-I aminoacyl-tRNA synthetase family. TyrS type 1 subfamily. As to quaternary structure, homodimer.

Its subcellular location is the cytoplasm. The catalysed reaction is tRNA(Tyr) + L-tyrosine + ATP = L-tyrosyl-tRNA(Tyr) + AMP + diphosphate + H(+). In terms of biological role, catalyzes the attachment of tyrosine to tRNA(Tyr) in a two-step reaction: tyrosine is first activated by ATP to form Tyr-AMP and then transferred to the acceptor end of tRNA(Tyr). This chain is Tyrosine--tRNA ligase, found in Blochmanniella floridana.